We begin with the raw amino-acid sequence, 141 residues long: Flagellar assembly factor FliW (141 aa).

It belongs to the FliW family. In terms of assembly, interacts with translational regulator CsrA and flagellin(s).

The protein resides in the cytoplasm. Functionally, acts as an anti-CsrA protein, binds CsrA and prevents it from repressing translation of its target genes, one of which is flagellin. Binds to flagellin and participates in the assembly of the flagellum. In Clostridium botulinum (strain Alaska E43 / Type E3), this protein is Flagellar assembly factor FliW.